The following is a 483-amino-acid chain: ATP synthase subunit beta (483 aa).

169–176 (GGAGVGKT) provides a ligand contact to ATP.

It belongs to the ATPase alpha/beta chains family. As to quaternary structure, F-type ATPases have 2 components, CF(1) - the catalytic core - and CF(0) - the membrane proton channel. CF(1) has five subunits: alpha(3), beta(3), gamma(1), delta(1), epsilon(1). CF(0) has three main subunits: a(1), b(2) and c(9-12). The alpha and beta chains form an alternating ring which encloses part of the gamma chain. CF(1) is attached to CF(0) by a central stalk formed by the gamma and epsilon chains, while a peripheral stalk is formed by the delta and b chains.

It localises to the cell membrane. It carries out the reaction ATP + H2O + 4 H(+)(in) = ADP + phosphate + 5 H(+)(out). Produces ATP from ADP in the presence of a proton gradient across the membrane. The catalytic sites are hosted primarily by the beta subunits. The polypeptide is ATP synthase subunit beta (Rhodococcus erythropolis (strain PR4 / NBRC 100887)).